The sequence spans 190 residues: Imidazoleglycerol-phosphate dehydratase (190 aa).

The protein belongs to the imidazoleglycerol-phosphate dehydratase family.

It localises to the cytoplasm. It catalyses the reaction D-erythro-1-(imidazol-4-yl)glycerol 3-phosphate = 3-(imidazol-4-yl)-2-oxopropyl phosphate + H2O. It participates in amino-acid biosynthesis; L-histidine biosynthesis; L-histidine from 5-phospho-alpha-D-ribose 1-diphosphate: step 6/9. The polypeptide is Imidazoleglycerol-phosphate dehydratase (Sulfurimonas denitrificans (strain ATCC 33889 / DSM 1251) (Thiomicrospira denitrificans (strain ATCC 33889 / DSM 1251))).